We begin with the raw amino-acid sequence, 166 residues long: Large ribosomal subunit protein uL10 (166 aa).

The protein belongs to the universal ribosomal protein uL10 family. In terms of assembly, part of the ribosomal stalk of the 50S ribosomal subunit. The N-terminus interacts with L11 and the large rRNA to form the base of the stalk. The C-terminus forms an elongated spine to which L12 dimers bind in a sequential fashion forming a multimeric L10(L12)X complex.

Forms part of the ribosomal stalk, playing a central role in the interaction of the ribosome with GTP-bound translation factors. This Streptococcus pyogenes serotype M18 (strain MGAS8232) protein is Large ribosomal subunit protein uL10 (rplJ).